A 350-amino-acid polypeptide reads, in one-letter code: Biotin synthase (350 aa).

The 219-residue stretch at 63–281 (GDIELATLLS…IAVARITMPK (219 aa)) folds into the Radical SAM core domain. [4Fe-4S] cluster contacts are provided by Cys-78, Cys-82, and Cys-85. Residues Cys-122, Cys-153, Cys-213, and Arg-285 each contribute to the [2Fe-2S] cluster site.

This sequence belongs to the radical SAM superfamily. Biotin synthase family. Homodimer. The cofactor is [4Fe-4S] cluster. It depends on [2Fe-2S] cluster as a cofactor.

It catalyses the reaction (4R,5S)-dethiobiotin + (sulfur carrier)-SH + 2 reduced [2Fe-2S]-[ferredoxin] + 2 S-adenosyl-L-methionine = (sulfur carrier)-H + biotin + 2 5'-deoxyadenosine + 2 L-methionine + 2 oxidized [2Fe-2S]-[ferredoxin]. It participates in cofactor biosynthesis; biotin biosynthesis; biotin from 7,8-diaminononanoate: step 2/2. Functionally, catalyzes the conversion of dethiobiotin (DTB) to biotin by the insertion of a sulfur atom into dethiobiotin via a radical-based mechanism. In Acidovorax ebreus (strain TPSY) (Diaphorobacter sp. (strain TPSY)), this protein is Biotin synthase.